The chain runs to 97 residues: Large ribosomal subunit protein uL23 (97 aa).

Belongs to the universal ribosomal protein uL23 family. In terms of assembly, part of the 50S ribosomal subunit. Contacts protein L29, and trigger factor when it is bound to the ribosome.

One of the early assembly proteins it binds 23S rRNA. One of the proteins that surrounds the polypeptide exit tunnel on the outside of the ribosome. Forms the main docking site for trigger factor binding to the ribosome. The sequence is that of Large ribosomal subunit protein uL23 from Clostridium botulinum (strain ATCC 19397 / Type A).